The primary structure comprises 127 residues: UPF0738 protein Bsph_1225 (127 aa).

Belongs to the UPF0738 family.

The polypeptide is UPF0738 protein Bsph_1225 (Lysinibacillus sphaericus (strain C3-41)).